A 691-amino-acid chain; its full sequence is DNA ligase (691 aa).

Residues D41–D45, S90–L91, and E130 contribute to the NAD(+) site. The active-site N6-AMP-lysine intermediate is the K132. NAD(+) contacts are provided by R153, E190, K307, and K331. C425, C428, C443, and C449 together coordinate Zn(2+). In terms of domain architecture, BRCT spans A610–R691.

This sequence belongs to the NAD-dependent DNA ligase family. LigA subfamily. Requires Mg(2+) as cofactor. Mn(2+) serves as cofactor.

The catalysed reaction is NAD(+) + (deoxyribonucleotide)n-3'-hydroxyl + 5'-phospho-(deoxyribonucleotide)m = (deoxyribonucleotide)n+m + AMP + beta-nicotinamide D-nucleotide.. In terms of biological role, DNA ligase that catalyzes the formation of phosphodiester linkages between 5'-phosphoryl and 3'-hydroxyl groups in double-stranded DNA using NAD as a coenzyme and as the energy source for the reaction. It is essential for DNA replication and repair of damaged DNA. The chain is DNA ligase from Burkholderia pseudomallei (strain K96243).